The primary structure comprises 70 residues: Exodeoxyribonuclease 7 small subunit (70 aa).

Belongs to the XseB family. Heterooligomer composed of large and small subunits.

It localises to the cytoplasm. It catalyses the reaction Exonucleolytic cleavage in either 5'- to 3'- or 3'- to 5'-direction to yield nucleoside 5'-phosphates.. Its function is as follows. Bidirectionally degrades single-stranded DNA into large acid-insoluble oligonucleotides, which are then degraded further into small acid-soluble oligonucleotides. This is Exodeoxyribonuclease 7 small subunit from Streptococcus pneumoniae serotype 2 (strain D39 / NCTC 7466).